An 801-amino-acid polypeptide reads, in one-letter code: Probable methionine--tRNA ligase (801 aa).

A 'HIGH' region motif is present at residues 25–35 (PYVNNVPHLGN). The 'KMSKS' region signature appears at 347 to 351 (KFSKS). Residue Lys350 coordinates ATP. A disordered region spans residues 606–633 (DKLKGTKLSDGGQKKEQKKQSGGSKSKN). The region spanning 639-742 (TVAKLDIRVG…ESAAVGERVT (104 aa)) is the tRNA-binding domain.

The protein belongs to the class-I aminoacyl-tRNA synthetase family.

It localises to the cytoplasm. The catalysed reaction is tRNA(Met) + L-methionine + ATP = L-methionyl-tRNA(Met) + AMP + diphosphate. The protein is Probable methionine--tRNA ligase of Oryza sativa subsp. japonica (Rice).